A 146-amino-acid polypeptide reads, in one-letter code: Hemoglobin subunit beta (146 aa).

Val-1 is subject to N-acetylvaline. A Globin domain is found at 2-146; sequence HLTGEEKSAV…VANALAHKYH (145 aa). At Thr-12 the chain carries Phosphothreonine. Residue Ser-44 is modified to Phosphoserine. N6-acetyllysine is present on Lys-59. Position 63 (His-63) interacts with heme b. Position 82 is an N6-acetyllysine (Lys-82). His-92 provides a ligand contact to heme b. Cys-93 is modified (S-nitrosocysteine). The residue at position 144 (Lys-144) is an N6-acetyllysine.

Belongs to the globin family. In terms of assembly, heterotetramer of two alpha chains and two beta chains. Red blood cells.

Functionally, involved in oxygen transport from the lung to the various peripheral tissues. The sequence is that of Hemoglobin subunit beta (HBB) from Phoca vitulina (Harbor seal).